Consider the following 454-residue polypeptide: ABSCISIC ACID-INSENSITIVE 5-like protein 6 (454 aa).

Phosphoserine occurs at positions 32, 55, and 126. Threonine 169 carries the phosphothreonine modification. A bZIP domain is found at 372–435; the sequence is IERRQKRMIK…KNQLLEPLRQ (64 aa). Residues 374–393 form a basic motif region; the sequence is RRQKRMIKNRESAARSRARK. Residues 400–414 are leucine-zipper; it reads LEAEIAQLKELNEEL.

The protein belongs to the bZIP family. ABI5 subfamily. In terms of assembly, DNA-binding heterodimer. Interacts with ABI3 and the AFP proteins AFP1, AFP2, AFP3 and AFP4. As to expression, expressed in roots and flowers.

The protein resides in the nucleus. Functionally, binds to the ABA-responsive element (ABRE). Mediates stress-responsive ABA signaling. The chain is ABSCISIC ACID-INSENSITIVE 5-like protein 6 (ABF3) from Arabidopsis thaliana (Mouse-ear cress).